The following is a 478-amino-acid chain: RNA exonuclease 3 (478 aa).

The Exonuclease domain maps to 320–465; it reads VLALDCEMAF…EDAIAAMDVI (146 aa).

The protein belongs to the REXO1/REXO3 family.

It localises to the cytoplasm. The protein resides in the nucleus. 3' to 5' exoribonuclease required for proper 3' end maturation of MRP RNA and of the U5L snRNA. This is RNA exonuclease 3 (REX3) from Kluyveromyces lactis (strain ATCC 8585 / CBS 2359 / DSM 70799 / NBRC 1267 / NRRL Y-1140 / WM37) (Yeast).